Consider the following 148-residue polypeptide: Myosin light chain 3, skeletal muscle isoform (148 aa).

Position 1 is an N-acetylthreonine (T1). EF-hand domains lie at 6–41 (DQIEDFKEAFGLFDRIGDSQVAFNQVADIMRALGQN) and 82–117 (GTYDDYVEGLRVFDKEGNGTVMGAELRIVLSTLGEK).

In terms of assembly, myosin is a hexamer of 2 heavy chains and 4 light chains.

The sequence is that of Myosin light chain 3, skeletal muscle isoform from Chelon ramada (Thin-lipped grey mullet).